A 301-amino-acid polypeptide reads, in one-letter code: Sulfate adenylyltransferase subunit 2 2 (301 aa).

This sequence belongs to the PAPS reductase family. CysD subfamily. As to quaternary structure, heterodimer composed of CysD, the smaller subunit, and CysN.

The enzyme catalyses sulfate + ATP + H(+) = adenosine 5'-phosphosulfate + diphosphate. The protein operates within sulfur metabolism; hydrogen sulfide biosynthesis; sulfite from sulfate: step 1/3. In terms of biological role, with CysN forms the ATP sulfurylase (ATPS) that catalyzes the adenylation of sulfate producing adenosine 5'-phosphosulfate (APS) and diphosphate, the first enzymatic step in sulfur assimilation pathway. APS synthesis involves the formation of a high-energy phosphoric-sulfuric acid anhydride bond driven by GTP hydrolysis by CysN coupled to ATP hydrolysis by CysD. This chain is Sulfate adenylyltransferase subunit 2 2, found in Shewanella sediminis (strain HAW-EB3).